A 464-amino-acid chain; its full sequence is Multifunctional dye peroxidase DyP2 (464 aa).

Asp-203 acts as the Proton acceptor in catalysis. Mn(2+) contacts are provided by Glu-258, Glu-273, and Glu-284. His-321 serves as a coordination point for heme.

Belongs to the DyP-type peroxidase family. As to quaternary structure, exists both as a monomeric and oligomeric species in solution; the monomeric form contains no bound heme cofactor and is inactive. Heme b is required as a cofactor. Mn(2+) serves as cofactor.

The protein localises to the secreted. The enzyme catalyses 1-(4-hydroxy-3-methoxyphenyl)-2-(2-methoxyphenoxy)propane-1,3-diol + H2O2 = guaiacol + vanillin + glycolaldehyde + H2O. It catalyses the reaction 2 Mn(2+) + H2O2 + 2 H(+) = 2 Mn(3+) + 2 H2O. The catalysed reaction is 2 a phenolic donor + H2O2 = 2 a phenolic radical donor + 2 H2O. It carries out the reaction Reactive Blue 5 + 2 H2O2 = 2,2'-disulfonyl azobenzene + 3-[(4-amino-6-chloro-1,3,5-triazin-2-yl)amino]benzenesulfonate + phthalate + 2 H2O + 2 H(+). Displays both high peroxidase and manganese peroxidase activity. Is likely involved in lignin degradation. Also has a Mn-dependent oxidase mode of action that expands its substrate scope in vitro; is thus able to catalyze the O(2)- and Mn-dependent oxidative decarboxylation of 4-methoxymandelate to anisaldehyde. The chain is Multifunctional dye peroxidase DyP2 from Amycolatopsis sp. (strain ATCC 39116 / 75iv2).